We begin with the raw amino-acid sequence, 1464 residues long: Alpha-glucan water dikinase, chloroplastic (1464 aa).

Residues 1–77 (MSNSLGNNLL…KRAFSSSPHA (77 aa)) constitute a chloroplast transit peptide. His-1069 functions as the Tele-phosphohistidine intermediate in the catalytic mechanism.

The protein belongs to the PEP-utilizing enzyme family. As to quaternary structure, homodimer. Mg(2+) serves as cofactor. As to expression, expressed in leaves.

Its subcellular location is the plastid. It localises to the chloroplast. It carries out the reaction [(1-&gt;4)-alpha-D-glucosyl](n) + n ATP + n H2O = [(1-&gt;4)-6-phospho-alpha-D-glucosyl](n) + n AMP + n phosphate + 2n H(+). The catalysed reaction is ATP + protein L-histidine = ADP + protein N-phospho-L-histidine.. Its function is as follows. Mediates the incorporation of phosphate into starch-like alpha-glucan, mostly at the C-6 position of glucose units. Acts as an overall regulator of starch mobilization. Required for starch degradation, suggesting that the phosphate content of starch regulates its degradability. More active on alpha-1,6 branched amylopectin. The chain is Alpha-glucan water dikinase, chloroplastic (R1) from Solanum tuberosum (Potato).